The primary structure comprises 116 residues: Large ribosomal subunit protein uL18 (116 aa).

It belongs to the universal ribosomal protein uL18 family. In terms of assembly, part of the 50S ribosomal subunit; part of the 5S rRNA/L5/L18/L25 subcomplex. Contacts the 5S and 23S rRNAs.

Functionally, this is one of the proteins that bind and probably mediate the attachment of the 5S RNA into the large ribosomal subunit, where it forms part of the central protuberance. The polypeptide is Large ribosomal subunit protein uL18 (Psychrobacter arcticus (strain DSM 17307 / VKM B-2377 / 273-4)).